A 308-amino-acid chain; its full sequence is Probable pyridoxal 5'-phosphate synthase subunit pdx-1 (308 aa).

Asp-30 contacts D-ribose 5-phosphate. Lys-87 functions as the Schiff-base intermediate with D-ribose 5-phosphate in the catalytic mechanism. Gly-159 contacts D-ribose 5-phosphate. A D-glyceraldehyde 3-phosphate-binding site is contributed by Arg-171. D-ribose 5-phosphate is bound by residues Gly-224 and 245 to 246; that span reads GS.

The protein belongs to the PdxS/SNZ family.

The catalysed reaction is aldehydo-D-ribose 5-phosphate + D-glyceraldehyde 3-phosphate + L-glutamine = pyridoxal 5'-phosphate + L-glutamate + phosphate + 3 H2O + H(+). It functions in the pathway cofactor biosynthesis; pyridoxal 5'-phosphate biosynthesis. Catalyzes the formation of pyridoxal 5'-phosphate from ribose 5-phosphate (RBP), glyceraldehyde 3-phosphate (G3P) and ammonia. The ammonia is provided by pdx-2. Can also use ribulose 5-phosphate and dihydroxyacetone phosphate as substrates, resulting from enzyme-catalyzed isomerization of RBP and G3P, respectively. Also plays an indirect role in resistance to singlet oxygen-generating photosensitizers. The sequence is that of Probable pyridoxal 5'-phosphate synthase subunit pdx-1 (pdx-1) from Neurospora crassa (strain ATCC 24698 / 74-OR23-1A / CBS 708.71 / DSM 1257 / FGSC 987).